We begin with the raw amino-acid sequence, 919 residues long: Probable disease resistance protein At4g27220 (919 aa).

2 coiled-coil regions span residues 1–30 (MFRS…LKRS) and 74–95 (VEIL…KKIS). The NB-ARC domain maps to 121–399 (MLDKLKDCLK…AEGLLDGQHH (279 aa)). ATP is bound at residue 141–148 (GMGGVGKT). LRR repeat units follow at residues 447-468 (GEGF…QDKF), 469-492 (VSSV…VIEG), 494-516 (ETLV…FLQA), 519-540 (NLRI…FSNL), 542-564 (SLRS…ESLV), 565-587 (KLQF…EALS), 588-610 (SLRY…TILQ), and 611-635 (LSSL…EREG).

It belongs to the disease resistance NB-LRR family.

In terms of biological role, probable disease resistance protein. This is Probable disease resistance protein At4g27220 from Arabidopsis thaliana (Mouse-ear cress).